A 310-amino-acid chain; its full sequence is Mycothiol acetyltransferase (310 aa).

N-acetyltransferase domains lie at T5–R155 and P160–A309. L80 to V82 is a binding site for acetyl-CoA. The 1D-myo-inositol 2-(L-cysteinylamino)-2-deoxy-alpha-D-glucopyranoside site is built by D187, K226, and E238. I242 to T244 provides a ligand contact to acetyl-CoA. Position 276 (Y276) interacts with 1D-myo-inositol 2-(L-cysteinylamino)-2-deoxy-alpha-D-glucopyranoside. N281–R286 serves as a coordination point for acetyl-CoA.

It belongs to the acetyltransferase family. MshD subfamily. As to quaternary structure, monomer.

It catalyses the reaction 1D-myo-inositol 2-(L-cysteinylamino)-2-deoxy-alpha-D-glucopyranoside + acetyl-CoA = mycothiol + CoA + H(+). Catalyzes the transfer of acetyl from acetyl-CoA to desacetylmycothiol (Cys-GlcN-Ins) to form mycothiol. This is Mycothiol acetyltransferase from Acidimicrobium ferrooxidans (strain DSM 10331 / JCM 15462 / NBRC 103882 / ICP).